The following is a 498-amino-acid chain: Lysine--tRNA ligase (498 aa).

The Mg(2+) site is built by glutamate 409 and glutamate 416.

It belongs to the class-II aminoacyl-tRNA synthetase family. Homodimer. Mg(2+) serves as cofactor.

Its subcellular location is the cytoplasm. The enzyme catalyses tRNA(Lys) + L-lysine + ATP = L-lysyl-tRNA(Lys) + AMP + diphosphate. In Teredinibacter turnerae (strain ATCC 39867 / T7901), this protein is Lysine--tRNA ligase.